We begin with the raw amino-acid sequence, 380 residues long: MAPNLRKSHPLLKMVNNSLIDLPVPSNISAWWNFGSLLTICLLTQILTGLLLAMHYTADTTLAFSSVAHTCRNVQYGWLIRNLHANGASFFFICIYLHIGRGLYYGSYLYKETWNTGVILLLTLMATAFVGYVLPWGQMSFWGATVITNLFSAIPYIGQTLVEWAWGGFSVDNPTLTRFFALHFLLPFMIVGLSMIHLTFLHESGSNNPLGIVSDCDKIPFHPYFSLKDILGFILMLLPLTTLALFSPNLLGDPENFTPANPLITPPHIKPEWYFLFAYAILRSIPNKLGGVLALAASVLILFLAPFLHKAKQRTMTFRPISQLLFWILVANLLILTWVGSQPVEHPFIIIGQLASITYFTILLILFPIVGALENKMLNY.

The next 4 helical transmembrane spans lie at F34–M54, W78–I99, W114–L134, and F179–T199. H84 and H98 together coordinate heme b. Residues H183 and H197 each coordinate heme b. H202 is a binding site for a ubiquinone. Transmembrane regions (helical) follow at residues L227–S247, L289–H309, I321–S341, and F348–P368.

Belongs to the cytochrome b family. The cytochrome bc1 complex contains 11 subunits: 3 respiratory subunits (MT-CYB, CYC1 and UQCRFS1), 2 core proteins (UQCRC1 and UQCRC2) and 6 low-molecular weight proteins (UQCRH/QCR6, UQCRB/QCR7, UQCRQ/QCR8, UQCR10/QCR9, UQCR11/QCR10 and a cleavage product of UQCRFS1). This cytochrome bc1 complex then forms a dimer. It depends on heme b as a cofactor.

It is found in the mitochondrion inner membrane. Functionally, component of the ubiquinol-cytochrome c reductase complex (complex III or cytochrome b-c1 complex) that is part of the mitochondrial respiratory chain. The b-c1 complex mediates electron transfer from ubiquinol to cytochrome c. Contributes to the generation of a proton gradient across the mitochondrial membrane that is then used for ATP synthesis. This Pelecanoides garnotii (Peruvian diving petrel) protein is Cytochrome b (MT-CYB).